Here is a 364-residue protein sequence, read N- to C-terminus: Aminomethyltransferase (364 aa).

The protein belongs to the GcvT family. The glycine cleavage system is composed of four proteins: P, T, L and H.

The enzyme catalyses N(6)-[(R)-S(8)-aminomethyldihydrolipoyl]-L-lysyl-[protein] + (6S)-5,6,7,8-tetrahydrofolate = N(6)-[(R)-dihydrolipoyl]-L-lysyl-[protein] + (6R)-5,10-methylene-5,6,7,8-tetrahydrofolate + NH4(+). In terms of biological role, the glycine cleavage system catalyzes the degradation of glycine. This Shewanella piezotolerans (strain WP3 / JCM 13877) protein is Aminomethyltransferase.